Here is a 186-residue protein sequence, read N- to C-terminus: Phosphopantetheine adenylyltransferase (186 aa).

T14 provides a ligand contact to substrate. ATP-binding positions include 14-15 and H22; that span reads TF. Positions 46, 78, and 92 each coordinate substrate. Residues 93–95, E103, and 128–134 each bind ATP; these read GLR and WLYISST.

The protein belongs to the bacterial CoaD family. In terms of assembly, homohexamer. The cofactor is Mg(2+).

The protein localises to the cytoplasm. It catalyses the reaction (R)-4'-phosphopantetheine + ATP + H(+) = 3'-dephospho-CoA + diphosphate. It functions in the pathway cofactor biosynthesis; coenzyme A biosynthesis; CoA from (R)-pantothenate: step 4/5. Functionally, reversibly transfers an adenylyl group from ATP to 4'-phosphopantetheine, yielding dephospho-CoA (dPCoA) and pyrophosphate. This chain is Phosphopantetheine adenylyltransferase, found in Nitratidesulfovibrio vulgaris (strain ATCC 29579 / DSM 644 / CCUG 34227 / NCIMB 8303 / VKM B-1760 / Hildenborough) (Desulfovibrio vulgaris).